The primary structure comprises 412 residues: cAMP-dependent protein kinase regulatory subunit (412 aa).

A dimerization and phosphorylation region spans residues 1–142 (MSFEEVYEEL…RLKRSVAGNF (142 aa)). A Pseudophosphorylation motif motif is present at residues 101-105 (RRQSV). Ser-104 carries the post-translational modification Phosphoserine. Residues 143–277 (LFKN…EEVP), Glu-224, Arg-233, 278–412 (ILSS…STKA), Glu-344, and Arg-353 each bind 3',5'-cyclic AMP. The tract at residues 392-412 (MGMDNEYGDQSLHRSPPSTKA) is disordered.

Belongs to the cAMP-dependent kinase regulatory chain family. As to quaternary structure, tetramer, composed of 2 regulatory (R) and 2 catalytic (C) subunits. In the presence of cAMP it dissociates into 2 active monomeric C subunits and an R dimer.

The polypeptide is cAMP-dependent protein kinase regulatory subunit (cgs1) (Schizosaccharomyces pombe (strain 972 / ATCC 24843) (Fission yeast)).